The primary structure comprises 191 residues: Protein YceI (191 aa).

Residues 1–22 form the signal peptide; sequence MKKSLLGLTFASLMFSAGSAVA.

This sequence belongs to the UPF0312 family. Type 1 subfamily.

The protein localises to the periplasm. The sequence is that of Protein YceI from Escherichia coli O6:H1 (strain CFT073 / ATCC 700928 / UPEC).